The following is a 385-amino-acid chain: Lipid-A-disaccharide synthase (385 aa).

It belongs to the LpxB family.

The catalysed reaction is 2-N,3-O-bis[(3R)-3-hydroxytetradecanoyl]-alpha-D-glucosaminyl 1-phosphate + UDP-2-N,3-O-bis[(3R)-3-hydroxytetradecanoyl]-alpha-D-glucosamine = lipid A disaccharide (E. coli) + UDP + H(+). It carries out the reaction a lipid X + a UDP-2-N,3-O-bis[(3R)-3-hydroxyacyl]-alpha-D-glucosamine = a lipid A disaccharide + UDP + H(+). The protein operates within glycolipid biosynthesis; lipid IV(A) biosynthesis; lipid IV(A) from (3R)-3-hydroxytetradecanoyl-[acyl-carrier-protein] and UDP-N-acetyl-alpha-D-glucosamine: step 5/6. Condensation of UDP-2,3-diacylglucosamine and 2,3-diacylglucosamine-1-phosphate to form lipid A disaccharide, a precursor of lipid A, a phosphorylated glycolipid that anchors the lipopolysaccharide to the outer membrane of the cell. The chain is Lipid-A-disaccharide synthase from Wigglesworthia glossinidia brevipalpis.